The following is a 395-amino-acid chain: MADGLTDIDSSQITTNYDEVVTSFDDLGLKDELLRGIYGYGFENPSSIQQRAILPVIKGNDVLAQAQSGTGKTATFSISALQNIDEKIKKPQALIIAPTRELAHQIQKVVLAFGEYMKIECHACIGGTSVAEDIRVIQEGVHVIVGTPGRIHDMIERRILKTDLIKMFILDEADEMLSREFKDPIYDIFTTLPETTQTVLLSATMPAEVLDITGKFMRDPVRILVKKDELTLEGIKQFYIDVEQESYKFEVLCDLYETINVSQAVIFCNTRRKVDYLTQALTEADFTVSSMHGETEQSQRDVIMKAFRTGSSRILITTDLLARGIDVQQVSLVINFDLPSNRENYIHRIGRGGRFGRKGVAINFVTSEDHGMLKELERFYSTEIVEMPTNIADLI.

The short motif at T22 to Q50 is the Q motif element. The Helicase ATP-binding domain occupies I53 to I223. An ATP-binding site is contributed by A66–T73. Positions D171–D174 match the DEAD box motif. The Helicase C-terminal domain occupies G234 to I395.

The protein belongs to the DEAD box helicase family. eIF4A subfamily. In terms of assembly, component of the eIF4F complex, which composition varies with external and internal environmental conditions. It is composed of at least eIF4A, eIF4E and eIF4G.

The protein localises to the cytoplasm. It carries out the reaction ATP + H2O = ADP + phosphate + H(+). Its function is as follows. ATP-dependent RNA helicase which is a subunit of the eIF4F complex involved in cap recognition and is required for mRNA binding to ribosome. In the current model of translation initiation, eIF4A unwinds RNA secondary structures in the 5'-UTR of mRNAs which is necessary to allow efficient binding of the small ribosomal subunit, and subsequent scanning for the initiator codon. This chain is ATP-dependent RNA helicase eIF4A (TIF1), found in Yarrowia lipolytica (strain CLIB 122 / E 150) (Yeast).